Consider the following 99-residue polypeptide: DNA-binding protein HU (99 aa).

The disordered stretch occupies residues 67–86 (REGRNPKTGAKMKIDAYNQP).

It belongs to the bacterial histone-like protein family. Homodimer.

In terms of biological role, histone-like DNA-binding protein which is capable of wrapping DNA to stabilize it, and thus to prevent its denaturation under extreme environmental conditions. In Rickettsia conorii (strain ATCC VR-613 / Malish 7), this protein is DNA-binding protein HU (hup).